The sequence spans 828 residues: Auxin response factor 2B (828 aa).

The TF-B3 DNA-binding region spans 128–230 (FCKTLTASDT…ELRVGVRRAM (103 aa)). Disordered stretches follow at residues 348–397 (PDRV…GSSK), 681–703 (EQFQ…HSTR), and 791–828 (NPGT…PEDS). Residues 360–370 (LSPPALNPLPI) are compositionally biased toward pro residues. The segment covering 380 to 390 (VLPSSPDSSVL) has biased composition (polar residues). Residues 703–786 (RSCTKVHKQG…RKIFIYTKDE (84 aa)) form the PB1 domain. Positions 791–806 (NPGTLNSKGEDNSSVA) are enriched in polar residues.

This sequence belongs to the ARF family. As to quaternary structure, homodimers and heterodimers. In terms of tissue distribution, expressed in root, leaf and stem. Also expressed in flower and fruit. Expressed in flower buds about three days before opening including stamen, petal and sepal with the highest in ovary.

Its subcellular location is the nucleus. Its function is as follows. Auxin response factors (ARFs) are transcriptional factors that binds specifically to the DNA sequence 5'-TGTCTC-3' found in the auxin-responsive promoter elements (AuxREs). Could act as transcriptional activator or repressor. Involved in the control of fruit ripening process. Regulates expression of a number of ripening regulators, transcription factors, and ethylene biosynthesis and signaling components. May act as a transcriptional repressor of auxin-responsive genes. The chain is Auxin response factor 2B from Solanum lycopersicum (Tomato).